The primary structure comprises 491 residues: Glucose-6-phosphate exchanger SLC37A2 (491 aa).

A helical membrane pass occupies residues 5–25 (LAPGIWYRAFILLITFLIYTC). N-linked (GlcNAc...) asparagine glycosylation is found at asparagine 43, asparagine 52, and asparagine 58. 5 helical membrane-spanning segments follow: residues 78–98 (GAVDNAFLVAYAIGMFISGIF), 108–130 (LTAGMLLSGLFTSLFGLGYFWNI), 132–154 (VLWYFVLVQIFNGLVQTTGWPAV), 169–189 (LIMGIWNSHTSVGNILGSLLA), and 200–220 (SFVVPGVITAIMGIITFFFLI). The segment at 229-257 (SPPQHHGNPEESQDQPEDPANGPSCNKES) is disordered. 6 helical membrane passes run 292-312 (LCLLFAKLVSYTFLYWLPLYI), 328-348 (TLFDVGGIIGGILAGLVSDYI), 352-372 (ATTCCVMLILAAPMMFLYNHV), 377-397 (IGISIVMLLICGALVNGPYAL), 424-444 (AIIDGTGSIGAALGPLLAGLI), and 452-472 (VFYMLIAADVLACLLLCRLVY).

It belongs to the major facilitator superfamily. Organophosphate:Pi antiporter (OPA) (TC 2.A.1.4) family.

The protein localises to the endoplasmic reticulum membrane. The catalysed reaction is D-glucose 6-phosphate(in) + phosphate(out) = D-glucose 6-phosphate(out) + phosphate(in). With respect to regulation, inhibited by vanadate but not by chlorogenic acid. Functionally, inorganic phosphate and glucose-6-phosphate antiporter. May transport cytoplasmic glucose-6-phosphate into the lumen of the endoplasmic reticulum and translocate inorganic phosphate into the opposite direction. Independent of a lumenal glucose-6-phosphatase. May not play a role in homeostatic regulation of blood glucose levels. The sequence is that of Glucose-6-phosphate exchanger SLC37A2 from Bos taurus (Bovine).